Here is a 416-residue protein sequence, read N- to C-terminus: Serine/threonine transporter SstT (416 aa).

Transmembrane regions (helical) follow at residues 14-34 (GSIV…ALLS), 43-63 (FLGT…VFVL), 82-102 (VLVL…VASF), 141-161 (ALAT…GVAL), 192-212 (IGVF…ALMG), 220-240 (LLGS…FLAI), 298-318 (MAGA…TLGV), 339-359 (ASGV…LFGI), and 363-383 (VAMQ…SAET).

The protein belongs to the dicarboxylate/amino acid:cation symporter (DAACS) (TC 2.A.23) family.

The protein resides in the cell inner membrane. The catalysed reaction is L-serine(in) + Na(+)(in) = L-serine(out) + Na(+)(out). It catalyses the reaction L-threonine(in) + Na(+)(in) = L-threonine(out) + Na(+)(out). Functionally, involved in the import of serine and threonine into the cell, with the concomitant import of sodium (symport system). The protein is Serine/threonine transporter SstT of Laribacter hongkongensis (strain HLHK9).